The following is a 501-amino-acid chain: ADP,ATP carrier protein 3 (501 aa).

Helical transmembrane passes span 23-43 (LKLF…FGAL), 59-79 (IISF…TVLY), 90-110 (YIFY…AYII), 146-166 (YALM…LMFW), 183-203 (PVLG…LVFF), 227-247 (IMLQ…MLLF), 293-313 (IALL…PWKA), 326-346 (VNFM…FMII), 361-381 (LLTP…IIFI), 387-407 (CFGD…QNIL), 446-466 (FGKS…PTAT), and 470-490 (IIIY…WNVI).

The protein belongs to the ADP/ATP translocase tlc family.

It is found in the cell membrane. Its function is as follows. Provides the rickettsial cell with host ATP in exchange for rickettsial ADP. This is an obligate exchange system. This energy acquiring activity is an important component of rickettsial parasitism. In Rickettsia conorii (strain ATCC VR-613 / Malish 7), this protein is ADP,ATP carrier protein 3 (tlcC).